Consider the following 883-residue polypeptide: Phosphoenolpyruvate carboxylase (883 aa).

Residues His138 and Lys546 contribute to the active site.

It belongs to the PEPCase type 1 family. Requires Mg(2+) as cofactor.

The enzyme catalyses oxaloacetate + phosphate = phosphoenolpyruvate + hydrogencarbonate. Functionally, forms oxaloacetate, a four-carbon dicarboxylic acid source for the tricarboxylic acid cycle. The sequence is that of Phosphoenolpyruvate carboxylase from Shigella flexneri.